A 350-amino-acid polypeptide reads, in one-letter code: Derriere protein (350 aa).

The signal sequence occupies residues 1-16 (MLSLACFFSFLLMVKS). A propeptide spanning residues 17-236 (SPLTFQERML…SSCKTPRAKR (220 aa)) is cleaved from the precursor. Residues Asn171 and Asn202 are each glycosylated (N-linked (GlcNAc...) asparagine). Cystine bridges form between Cys249-Cys315, Cys278-Cys347, and Cys282-Cys349.

It belongs to the TGF-beta family. Homodimer; disulfide-linked. Also forms heterodimers with other TGF-beta family members including nodal2/nr-2 and bmp4.

It is found in the secreted. In terms of biological role, required for posterior mesoderm formation during embryogenesis. Acts indirectly to suppress head formation by altering mesodermal patterning. Also involved in the establishment of left-right axis asymmetry, acting upstream of nodal/nr-1. Can exert long-range effects in the embryo. The chain is Derriere protein from Xenopus tropicalis (Western clawed frog).